The primary structure comprises 368 residues: Nucleotide pyrophosphatase/phosphodiesterase (368 aa).

It belongs to the metallophosphoesterase superfamily. In terms of assembly, monomer and homomer. In terms of processing, glycosylated.

The protein resides in the plastid. Its subcellular location is the chloroplast. Hydrolyzes pyrophosphate, phosphodiester and phosphosulfate linkages of nucleotide-sugars, sulfonucleotides and nucleoside di and triphosphates. Highest activity observed with the substrates ADP-glucose and adenosine 5'-phosphosulfate. The sequence is that of Nucleotide pyrophosphatase/phosphodiesterase from Hordeum vulgare (Barley).